The chain runs to 427 residues: Membrane-bound hydrogenase subunit alpha (427 aa).

Residues cysteine 68, cysteine 71, cysteine 374, and cysteine 377 each coordinate Ni(2+).

It belongs to the complex I 49 kDa subunit family. As to quaternary structure, the membrane-bound hydrogenase complex is composed of MbhK and MbhL, and may also contain MbhJ. It depends on Ni(2+) as a cofactor.

It is found in the cell membrane. The enzyme catalyses H2 + 2 oxidized [2Fe-2S]-[ferredoxin] = 2 reduced [2Fe-2S]-[ferredoxin] + 2 H(+). With respect to regulation, inhibited by 0.1 mM Cu(2+). Alpha subunit of a hydrogen-evolving hydrogenase that utilizes protons both as a substrate for hydrogen production and proton translocation. Acts by coupling the redox reaction via ferredoxin and iron-sulfur (Fe-S) clusters to proton translocation across the membrane thereby conserving the redox energy in a proton gradient. In Pyrococcus furiosus (strain ATCC 43587 / DSM 3638 / JCM 8422 / Vc1), this protein is Membrane-bound hydrogenase subunit alpha.